Consider the following 726-residue polypeptide: MEFKRDNTVRFYGDEKQTIEVGEKRVPLFKSTTAPFMKQEVLPKKSKTRLKIPRFGRFKVFPENFEIERDKILDPGGDAVLQWNRVFLFWCLVALYVDPLFFFLSSVKRIGRSSCMTTDLKLGIVITFFRTLADLFYVLHIVIKFRTAYVSRTSRVFGRGELVKDPKLIARRYLRSDFIVDLIACLPLPQIVSWFILPSIRSSHSDHTTNALVLIVLVQYIPRLYLIFPLSAEIIKATGVVTTTAWAGAAYNLLQYMLASHILGSAWYLLSIERQATCWKAECHKESVPLQCVTDFFDCGTLHRDDRNNWQNTTVVFSNCDPSNNIQFTFGIFADALTKNVVSSPFLEKYLYCLWFGLQNLSSYGQNLSTSTSVLETMFAILVAIFGLVLFALLIGNMQTYLQSITVRLEEWRLKRRDTEEWMGHRLLPQNLRERVRRFVQYKWLATRGVDEETILHSLPADLRRDIQRHLCLDLVRRVPLFAQMDDQLLDAICERLASSLSTQGNYIVREGDPVTEMLFIIRGKLESSTTNGGRTGFFNSITLRPGDFCGEELLAWALLPKSTVNLPSSTRTVRALEEVEAFALQAGDLKFVANQFRRLHSKKLQHTFRYYSHQWRTWAACFVQVAWRRYKRKKLAKSLSLAESFSSYDEEEAVAVAATEEMSHEGEAQSGAKARHHTSNVKPHFAATILASRFAKNTRRTAHKLKDVEIPMLPKPDEPDFSVDD.

The Cytoplasmic portion of the chain corresponds to 1 to 86; the sequence is MEFKRDNTVR…GDAVLQWNRV (86 aa). The helical transmembrane segment at 87 to 107 threads the bilayer; it reads FLFWCLVALYVDPLFFFLSSV. Over 108–122 the chain is Extracellular; the sequence is KRIGRSSCMTTDLKL. The helical transmembrane segment at 123–143 threads the bilayer; the sequence is GIVITFFRTLADLFYVLHIVI. Residues 144 to 177 lie on the Cytoplasmic side of the membrane; sequence KFRTAYVSRTSRVFGRGELVKDPKLIARRYLRSD. Residues 178-198 traverse the membrane as a helical segment; it reads FIVDLIACLPLPQIVSWFILP. Residues 199–211 lie on the Extracellular side of the membrane; it reads SIRSSHSDHTTNA. A helical membrane pass occupies residues 212–232; that stretch reads LVLIVLVQYIPRLYLIFPLSA. The Cytoplasmic portion of the chain corresponds to 233–252; that stretch reads EIIKATGVVTTTAWAGAAYN. Residues 253-273 form a helical membrane-spanning segment; the sequence is LLQYMLASHILGSAWYLLSIE. Over 274 to 377 the chain is Extracellular; the sequence is RQATCWKAEC…LSTSTSVLET (104 aa). Residues 378–398 form a helical membrane-spanning segment; the sequence is MFAILVAIFGLVLFALLIGNM. The Cytoplasmic portion of the chain corresponds to 399–726; sequence QTYLQSITVR…PDEPDFSVDD (328 aa). A nucleoside 3',5'-cyclic phosphate-binding positions include 481–605 and E552; that span reads LFAQ…SKKL. Residues 597–612 are calmodulin-binding; it reads FRRLHSKKLQHTFRYY. Positions 617–646 constitute an IQ domain; the sequence is RTWAACFVQVAWRRYKRKKLAKSLSLAESF. The segment at 707 to 726 is disordered; it reads KDVEIPMLPKPDEPDFSVDD.

The protein belongs to the cyclic nucleotide-gated cation channel (TC 1.A.1.5) family. Homotetramer or heterotetramer.

The protein resides in the cell membrane. In terms of biological role, probable cyclic nucleotide-gated ion channel. The protein is Probable cyclic nucleotide-gated ion channel 14 (CNGC14) of Arabidopsis thaliana (Mouse-ear cress).